Consider the following 556-residue polypeptide: uncharacterized protein (556 aa).

Disordered regions lie at residues 1–40 (MSNS…TNEN), 80–243 (NTTQ…KQSW), 278–324 (YDSD…SSLP), 363–391 (RTKQ…KFVD), and 422–525 (DSKQ…ENSA). Residues 7-25 (NNNNNTNNNNNNNNNNNGN) show a composition bias toward low complexity. The span at 30-40 (EEPDDDSTNEN) shows a compositional bias: acidic residues. Low complexity-rich tracts occupy residues 80–133 (NTTQ…GTRS) and 164–181 (NDNN…NDSN). Residues 182–192 (IVDDDEDEEEF) show a composition bias toward acidic residues. Over residues 207–226 (STSSPSSTSSPIVSPQTQTS) the composition is skewed to low complexity. Polar residues predominate over residues 227 to 243 (KLESSMDVSPSSGKQSW). Composition is skewed to low complexity over residues 292–322 (NNSS…NSSS), 369–388 (KVQQ…NNNK), and 425–525 (QQNV…ENSA). A helical membrane pass occupies residues 528–548 (GSFIKNAVIFIFILLLMVVGF).

It is found in the membrane. This is an uncharacterized protein from Dictyostelium discoideum (Social amoeba).